The sequence spans 345 residues: Phosphoribosylformylglycinamidine cyclo-ligase (345 aa).

This sequence belongs to the AIR synthase family.

The protein resides in the cytoplasm. The catalysed reaction is 2-formamido-N(1)-(5-O-phospho-beta-D-ribosyl)acetamidine + ATP = 5-amino-1-(5-phospho-beta-D-ribosyl)imidazole + ADP + phosphate + H(+). It functions in the pathway purine metabolism; IMP biosynthesis via de novo pathway; 5-amino-1-(5-phospho-D-ribosyl)imidazole from N(2)-formyl-N(1)-(5-phospho-D-ribosyl)glycinamide: step 2/2. The polypeptide is Phosphoribosylformylglycinamidine cyclo-ligase (Myxococcus xanthus (strain DK1622)).